Reading from the N-terminus, the 123-residue chain is Large ribosomal subunit protein bL12 (123 aa).

This sequence belongs to the bacterial ribosomal protein bL12 family. In terms of assembly, homodimer. Part of the ribosomal stalk of the 50S ribosomal subunit. Forms a multimeric L10(L12)X complex, where L10 forms an elongated spine to which 2 to 4 L12 dimers bind in a sequential fashion. Binds GTP-bound translation factors.

Its function is as follows. Forms part of the ribosomal stalk which helps the ribosome interact with GTP-bound translation factors. Is thus essential for accurate translation. The sequence is that of Large ribosomal subunit protein bL12 from Acholeplasma laidlawii (strain PG-8A).